A 677-amino-acid polypeptide reads, in one-letter code: Methionine--tRNA ligase (677 aa).

The short motif at 15-25 (PYANGSIHLGH) is the 'HIGH' region element. Residues C146, C149, C159, and C162 each coordinate Zn(2+). A 'KMSKS' region motif is present at residues 333–337 (KMSKS). ATP is bound at residue K336. A tRNA-binding domain is found at 575-677 (DFAKVDLRVA…DGAKPGQQVK (103 aa)).

Belongs to the class-I aminoacyl-tRNA synthetase family. MetG type 1 subfamily. In terms of assembly, homodimer. Requires Zn(2+) as cofactor.

The protein localises to the cytoplasm. The enzyme catalyses tRNA(Met) + L-methionine + ATP = L-methionyl-tRNA(Met) + AMP + diphosphate. Is required not only for elongation of protein synthesis but also for the initiation of all mRNA translation through initiator tRNA(fMet) aminoacylation. In Salmonella arizonae (strain ATCC BAA-731 / CDC346-86 / RSK2980), this protein is Methionine--tRNA ligase.